The chain runs to 474 residues: PRAME family member 10 (474 aa).

Residues 97-124 (RWKLQVLDLRDVDENFWTIWSGARVLSC) form an LRR 1; degenerate repeat. Residues 179-203 (HLCCSKVQNYSMPTSSFRNLLERIY) form an LRR 2; degenerate repeat. An LRR 3; degenerate repeat occupies 204–230 (PDSIQELEVWKKCSLNKTGKFAPYLSQ). Residues 231–265 (MSNLRELFLAFGYERELYVSVQWPCIPDLDSPFLC) form an LRR 4; degenerate repeat. LRR repeat units follow at residues 266-291 (LYYP…LRYL), 292-323 (KNPL…SQLK), 324-342 (ELRL…PLGV), 348-375 (AATL…ALSH), and 376-400 (CSQL…LLRH).

Belongs to the PRAME family.

In Homo sapiens (Human), this protein is PRAME family member 10.